A 270-amino-acid polypeptide reads, in one-letter code: Putative carbamate hydrolase RutD (270 aa).

The protein belongs to the AB hydrolase superfamily. Hydrolase RutD family.

It catalyses the reaction carbamate + 2 H(+) = NH4(+) + CO2. Functionally, involved in pyrimidine catabolism. May facilitate the hydrolysis of carbamate, a reaction that can also occur spontaneously. This chain is Putative carbamate hydrolase RutD, found in Escherichia coli (strain SMS-3-5 / SECEC).